Reading from the N-terminus, the 325-residue chain is Glutarate 2-hydroxylase (325 aa).

Positions 160, 162, and 292 each coordinate Fe cation.

The protein belongs to the glutarate hydroxylase family. In terms of assembly, homotetramer. It depends on Fe(2+) as a cofactor.

It carries out the reaction glutarate + 2-oxoglutarate + O2 = (S)-2-hydroxyglutarate + succinate + CO2. Its pathway is amino-acid degradation. Its function is as follows. Acts as an alpha-ketoglutarate-dependent dioxygenase catalyzing hydroxylation of glutarate (GA) to L-2-hydroxyglutarate (L2HG). Functions in a L-lysine degradation pathway that proceeds via cadaverine, glutarate and L-2-hydroxyglutarate. The protein is Glutarate 2-hydroxylase of Escherichia coli (strain UTI89 / UPEC).